We begin with the raw amino-acid sequence, 1005 residues long: Regulator of telomere elongation helicase 1 homolog (1005 aa).

In terms of domain architecture, Helicase ATP-binding spans 7-322; that stretch reads AGIPVHFPFE…KEMLLELEKA (316 aa). 42-49 lines the ATP pocket; it reads SPTGTGKT. Residues C145, C163, C172, and C208 each contribute to the [4Fe-4S] cluster site. Residues 251–254 carry the DEAH box motif; the sequence is DEAH. T876 carries the post-translational modification Phosphothreonine. The segment at 893–917 is disordered; it reads NGPLKTEPSEPATTSSSFCPTPAQS.

This sequence belongs to the helicase family. RAD3/XPD subfamily.

Its subcellular location is the nucleus. It catalyses the reaction ATP + H2O = ADP + phosphate + H(+). Its function is as follows. A probable ATP-dependent DNA helicase implicated in DNA repair and the maintenance of genomic stability. Acts as an anti-recombinase to counteract toxic recombination and limit crossover during meiosis. Regulates meiotic recombination and crossover homeostasis by physically dissociating strand invasion events and thereby promotes noncrossover repair by meiotic synthesis dependent strand annealing (SDSA) as well as disassembly of D loop recombination intermediates. This is Regulator of telomere elongation helicase 1 homolog from Drosophila virilis (Fruit fly).